The sequence spans 248 residues: uncharacterized protein (248 aa).

An ABC transporter domain is found at 7 to 246 (VQLSNLSWTF…PASTILLPTS (240 aa)). 43–50 (GQSGSGKS) is a binding site for ATP.

This sequence belongs to the ABC transporter superfamily.

This is an uncharacterized protein from Mycobacterium tuberculosis (strain CDC 1551 / Oshkosh).